The primary structure comprises 235 residues: uncharacterized protein (235 aa).

The protein belongs to the UreF family.

It localises to the cytoplasm. It is found in the nucleus. Its function is as follows. Probably facilitates nickel incorporation. This is an uncharacterized protein from Schizosaccharomyces pombe (strain 972 / ATCC 24843) (Fission yeast).